A 539-amino-acid polypeptide reads, in one-letter code: Glucose-6-phosphate isomerase (539 aa).

Catalysis depends on glutamate 353, which acts as the Proton donor. Catalysis depends on residues histidine 384 and lysine 505.

The protein belongs to the GPI family.

Its subcellular location is the cytoplasm. It catalyses the reaction alpha-D-glucose 6-phosphate = beta-D-fructose 6-phosphate. It participates in carbohydrate biosynthesis; gluconeogenesis. The protein operates within carbohydrate degradation; glycolysis; D-glyceraldehyde 3-phosphate and glycerone phosphate from D-glucose: step 2/4. In terms of biological role, catalyzes the reversible isomerization of glucose-6-phosphate to fructose-6-phosphate. The chain is Glucose-6-phosphate isomerase from Ralstonia nicotianae (strain ATCC BAA-1114 / GMI1000) (Ralstonia solanacearum).